The chain runs to 498 residues: ATP synthase subunit alpha, chloroplastic (498 aa).

Residue 170-177 (GDRQTGKT) participates in ATP binding.

The protein belongs to the ATPase alpha/beta chains family. As to quaternary structure, F-type ATPases have 2 components, CF(1) - the catalytic core - and CF(0) - the membrane proton channel. CF(1) has five subunits: alpha(3), beta(3), gamma(1), delta(1), epsilon(1). CF(0) has four main subunits: a, b, b' and c.

The protein resides in the plastid. Its subcellular location is the chloroplast thylakoid membrane. It carries out the reaction ATP + H2O + 4 H(+)(in) = ADP + phosphate + 5 H(+)(out). Functionally, produces ATP from ADP in the presence of a proton gradient across the membrane. The alpha chain is a regulatory subunit. This Oltmannsiellopsis viridis (Marine flagellate) protein is ATP synthase subunit alpha, chloroplastic.